The sequence spans 185 residues: Ribosome-recycling factor (185 aa).

This sequence belongs to the RRF family.

Its subcellular location is the cytoplasm. In terms of biological role, responsible for the release of ribosomes from messenger RNA at the termination of protein biosynthesis. May increase the efficiency of translation by recycling ribosomes from one round of translation to another. This chain is Ribosome-recycling factor, found in Parafrankia sp. (strain EAN1pec).